A 130-amino-acid polypeptide reads, in one-letter code: Small ribosomal subunit protein uS11 (130 aa).

Belongs to the universal ribosomal protein uS11 family. As to quaternary structure, part of the 30S ribosomal subunit. Interacts with proteins S7 and S18. Binds to IF-3.

In terms of biological role, located on the platform of the 30S subunit, it bridges several disparate RNA helices of the 16S rRNA. Forms part of the Shine-Dalgarno cleft in the 70S ribosome. The polypeptide is Small ribosomal subunit protein uS11 (Ruegeria pomeroyi (strain ATCC 700808 / DSM 15171 / DSS-3) (Silicibacter pomeroyi)).